The following is a 287-amino-acid chain: Glycine--tRNA ligase alpha subunit (287 aa).

This sequence belongs to the class-II aminoacyl-tRNA synthetase family. Tetramer of two alpha and two beta subunits.

The protein localises to the cytoplasm. The catalysed reaction is tRNA(Gly) + glycine + ATP = glycyl-tRNA(Gly) + AMP + diphosphate. This is Glycine--tRNA ligase alpha subunit from Campylobacter jejuni (strain RM1221).